A 124-amino-acid chain; its full sequence is CBS domain-containing protein MJ0729 (124 aa).

CBS domains follow at residues 10–67 (MNKD…IEDL) and 70–124 (LIDE…YKNR).

As to quaternary structure, exhibits a pH-dependent oligomerization state: at pH 7, the dominant species is a dimer, where each monomer is a two-CBS domain protein, and at pH 4.5-4.8, the dominant species is a tetramer, with an oblong shape. At pH 2.5, there is formation of intermolecular hydrogen bonds, suggesting the presence of high-molecular weight species. The physiological dimeric species is thermal and chemically very stable.

This chain is CBS domain-containing protein MJ0729, found in Methanocaldococcus jannaschii (strain ATCC 43067 / DSM 2661 / JAL-1 / JCM 10045 / NBRC 100440) (Methanococcus jannaschii).